We begin with the raw amino-acid sequence, 443 residues long: Threonine/serine transporter TdcC (443 aa).

A run of 11 helical transmembrane segments spans residues 22-42, 44-64, 97-117, 135-155, 163-183, 207-227, 259-279, 319-339, 366-386, 389-409, and 422-442; these read TTWT…FFPI, AGFG…PIAF, GVVI…IYGV, ALNR…IIWF, VMSF…LSLI, ILVT…FSPI, ASIL…FALS, ASII…LGTL, LSMV…PNIL, IEAM…MYAI, and IDNV…VYKV.

This sequence belongs to the amino acid/polyamine transporter 2 family. SdaC/TdcC subfamily.

Its subcellular location is the cell inner membrane. The catalysed reaction is L-threonine(in) + H(+)(in) = L-threonine(out) + H(+)(out). The enzyme catalyses L-serine(in) + H(+)(in) = L-serine(out) + H(+)(out). Functionally, involved in the import of threonine and serine into the cell, with the concomitant import of a proton (symport system). The sequence is that of Threonine/serine transporter TdcC from Escherichia fergusonii (strain ATCC 35469 / DSM 13698 / CCUG 18766 / IAM 14443 / JCM 21226 / LMG 7866 / NBRC 102419 / NCTC 12128 / CDC 0568-73).